The sequence spans 183 residues: Ribosome-recycling factor (183 aa).

This sequence belongs to the RRF family.

Its subcellular location is the cytoplasm. Responsible for the release of ribosomes from messenger RNA at the termination of protein biosynthesis. May increase the efficiency of translation by recycling ribosomes from one round of translation to another. This is Ribosome-recycling factor from Treponema pallidum (strain Nichols).